The sequence spans 462 residues: uncharacterized protein (462 aa).

The region spanning 12 to 70 (MLKKNDIIQVAISDLSHEGAGVAKHDGFVFFVDNALPEEVIDMRVLKVNKNSGFGKVEA) is the TRAM domain. 4 residues coordinate S-adenosyl-L-methionine: Q294, Y323, E344, and D392. The Nucleophile role is filled by C419.

The protein belongs to the class I-like SAM-binding methyltransferase superfamily. RNA M5U methyltransferase family.

This is an uncharacterized protein from Streptococcus pyogenes serotype M1.